The primary structure comprises 342 residues: Heat-inducible transcription repressor HrcA (342 aa).

It belongs to the HrcA family.

Functionally, negative regulator of class I heat shock genes (grpE-dnaK-dnaJ and groELS operons). Prevents heat-shock induction of these operons. This chain is Heat-inducible transcription repressor HrcA, found in Dechloromonas aromatica (strain RCB).